The chain runs to 366 residues: Chorismate synthase (366 aa).

Arg-48 and Arg-54 together coordinate NADP(+). FMN is bound by residues 125–127 (RSS), 238–239 (NA), Gly-278, 293–297 (KPTSS), and Arg-319.

Belongs to the chorismate synthase family. As to quaternary structure, homotetramer. FMNH2 serves as cofactor.

It carries out the reaction 5-O-(1-carboxyvinyl)-3-phosphoshikimate = chorismate + phosphate. Its pathway is metabolic intermediate biosynthesis; chorismate biosynthesis; chorismate from D-erythrose 4-phosphate and phosphoenolpyruvate: step 7/7. In terms of biological role, catalyzes the anti-1,4-elimination of the C-3 phosphate and the C-6 proR hydrogen from 5-enolpyruvylshikimate-3-phosphate (EPSP) to yield chorismate, which is the branch point compound that serves as the starting substrate for the three terminal pathways of aromatic amino acid biosynthesis. This reaction introduces a second double bond into the aromatic ring system. This chain is Chorismate synthase, found in Cellvibrio japonicus (strain Ueda107) (Pseudomonas fluorescens subsp. cellulosa).